The chain runs to 318 residues: DNA-directed RNA polymerase subunit alpha (318 aa).

Residues 1–232 (MAHQRIVGPT…NLFSPLQNVR (232 aa)) are alpha N-terminal domain (alpha-NTD). The segment at 246–318 (KMTEVLVEEL…HLPKEKFTKD (73 aa)) is alpha C-terminal domain (alpha-CTD).

Belongs to the RNA polymerase alpha chain family. As to quaternary structure, in plastids the minimal PEP RNA polymerase catalytic core is composed of four subunits: alpha, beta, beta', and beta''. When a (nuclear-encoded) sigma factor is associated with the core the holoenzyme is formed, which can initiate transcription.

The protein localises to the plastid. The protein resides in the chloroplast. It catalyses the reaction RNA(n) + a ribonucleoside 5'-triphosphate = RNA(n+1) + diphosphate. Functionally, DNA-dependent RNA polymerase catalyzes the transcription of DNA into RNA using the four ribonucleoside triphosphates as substrates. The protein is DNA-directed RNA polymerase subunit alpha of Chlorokybus atmophyticus (Soil alga).